Reading from the N-terminus, the 100-residue chain is Light-independent protochlorophyllide reductase subunit B (100 aa).

The protein belongs to the ChlB/BchB/BchZ family. Protochlorophyllide reductase is composed of three subunits; ChlL, ChlN and ChlB. Forms a heterotetramer of two ChlB and two ChlN subunits. [4Fe-4S] cluster serves as cofactor.

It localises to the plastid. It is found in the chloroplast. It carries out the reaction chlorophyllide a + oxidized 2[4Fe-4S]-[ferredoxin] + 2 ADP + 2 phosphate = protochlorophyllide a + reduced 2[4Fe-4S]-[ferredoxin] + 2 ATP + 2 H2O. It functions in the pathway porphyrin-containing compound metabolism; chlorophyll biosynthesis (light-independent). Its function is as follows. Component of the dark-operative protochlorophyllide reductase (DPOR) that uses Mg-ATP and reduced ferredoxin to reduce ring D of protochlorophyllide (Pchlide) to form chlorophyllide a (Chlide). This reaction is light-independent. The NB-protein (ChlN-ChlB) is the catalytic component of the complex. This Polytrichum commune (Haircap moss) protein is Light-independent protochlorophyllide reductase subunit B (chlB).